Reading from the N-terminus, the 304-residue chain is Polyisoprenyl-teichoic acid--peptidoglycan teichoic acid transferase TagU (304 aa).

Residues 1-4 (MKKK) are Cytoplasmic-facing. The helical; Signal-anchor for type II membrane protein transmembrane segment at 5–25 (ILFWILGIIGILIIGGGAYAY) threads the bilayer. Over 26–304 (SIYSSVSKTL…KLRAHLEVTK (279 aa)) the chain is Extracellular.

It belongs to the LytR/CpsA/Psr (LCP) family.

The protein localises to the cell membrane. Its pathway is cell wall biogenesis. May catalyze the final step in cell wall teichoic acid biosynthesis, the transfer of the anionic cell wall polymers (APs) from their lipid-linked precursor to the cell wall peptidoglycan (PG). The protein is Polyisoprenyl-teichoic acid--peptidoglycan teichoic acid transferase TagU of Bacillus cereus (strain ATCC 14579 / DSM 31 / CCUG 7414 / JCM 2152 / NBRC 15305 / NCIMB 9373 / NCTC 2599 / NRRL B-3711).